The chain runs to 77 residues: Subtilisin-chymotrypsin inhibitor CI-1C (77 aa).

Belongs to the protease inhibitor I13 (potato type I serine protease inhibitor) family.

Its function is as follows. Inhibits both subtilisin and chymotrypsin. The protein is Subtilisin-chymotrypsin inhibitor CI-1C of Hordeum vulgare (Barley).